Consider the following 225-residue polypeptide: Sugar fermentation stimulation protein homolog (225 aa).

This sequence belongs to the SfsA family.

In Sulfurisphaera tokodaii (strain DSM 16993 / JCM 10545 / NBRC 100140 / 7) (Sulfolobus tokodaii), this protein is Sugar fermentation stimulation protein homolog.